A 694-amino-acid polypeptide reads, in one-letter code: Methionine--tRNA ligase (694 aa).

The short motif at 12–22 (PYANGPLHLGH) is the 'HIGH' region element. Zn(2+)-binding residues include Cys143, Cys146, Cys156, and Cys159. The short motif at 330 to 334 (KMSKS) is the 'KMSKS' region element. Lys333 provides a ligand contact to ATP. The segment covering 550 to 575 (LAAPAAPATTSKAAPAKPDTKPAAAA) has biased composition (low complexity). Positions 550–580 (LAAPAAPATTSKAAPAKPDTKPAAAANPQSP) are disordered. The region spanning 591–694 (DFAKLDLRIG…SGAQPGMPVR (104 aa)) is the tRNA-binding domain.

This sequence belongs to the class-I aminoacyl-tRNA synthetase family. MetG type 1 subfamily. In terms of assembly, homodimer. Zn(2+) serves as cofactor.

The protein localises to the cytoplasm. The catalysed reaction is tRNA(Met) + L-methionine + ATP = L-methionyl-tRNA(Met) + AMP + diphosphate. Functionally, is required not only for elongation of protein synthesis but also for the initiation of all mRNA translation through initiator tRNA(fMet) aminoacylation. This chain is Methionine--tRNA ligase, found in Xanthomonas oryzae pv. oryzae (strain MAFF 311018).